The chain runs to 175 residues: Interferon gamma (175 aa).

The first 23 residues, 1–23 (MNATCCILALLLCLTQAISGCYC), serve as a signal peptide directing secretion. At Gln-24 the chain carries Pyrrolidone carboxylic acid. Residues Asn-39 and Asn-106 are each glycosylated (N-linked (GlcNAc...) asparagine).

Belongs to the type II (or gamma) interferon family. In terms of assembly, homodimer. Interacts with IFNGR1 (via extracellular domain); this interaction promotes IFNGR1 dimerization. In terms of tissue distribution, released primarily from activated T lymphocytes.

Its subcellular location is the secreted. Its function is as follows. Type II interferon produced by immune cells such as T-cells and NK cells that plays crucial roles in antimicrobial, antiviral, and antitumor responses by activating effector immune cells and enhancing antigen presentation. Primarily signals through the JAK-STAT pathway after interaction with its receptor IFNGR1 to affect gene regulation. Upon IFNG binding, IFNGR1 intracellular domain opens out to allow association of downstream signaling components JAK2, JAK1 and STAT1, leading to STAT1 activation, nuclear translocation and transcription of IFNG-regulated genes. Many of the induced genes are transcription factors such as IRF1 that are able to further drive regulation of a next wave of transcription. Plays a role in class I antigen presentation pathway by inducing a replacement of catalytic proteasome subunits with immunoproteasome subunits. In turn, increases the quantity, quality, and repertoire of peptides for class I MHC loading. Increases the efficiency of peptide generation also by inducing the expression of activator PA28 that associates with the proteasome and alters its proteolytic cleavage preference. Up-regulates as well MHC II complexes on the cell surface by promoting expression of several key molecules such as cathepsins B/CTSB, H/CTSH, and L/CTSL. Participates in the regulation of hematopoietic stem cells during development and under homeostatic conditions by affecting their development, quiescence, and differentiation. The sequence is that of Interferon gamma (IFNG) from Peromyscus maniculatus (North American deer mouse).